A 142-amino-acid chain; its full sequence is ATP synthase epsilon chain (142 aa).

This sequence belongs to the ATPase epsilon chain family. In terms of assembly, F-type ATPases have 2 components, CF(1) - the catalytic core - and CF(0) - the membrane proton channel. CF(1) has five subunits: alpha(3), beta(3), gamma(1), delta(1), epsilon(1). CF(0) has three main subunits: a, b and c.

It is found in the cell inner membrane. Its function is as follows. Produces ATP from ADP in the presence of a proton gradient across the membrane. The polypeptide is ATP synthase epsilon chain (Shewanella piezotolerans (strain WP3 / JCM 13877)).